A 155-amino-acid polypeptide reads, in one-letter code: MRRRRAVKREVAPDPIYNDVLVTKLINRVMKDGKKSKAEKIVYKALEMLSEKTKQPPMEAFKKAINNVKPLLEVRPRRVGGATYQIPFEVPEDRALSLALRWIVAAARAKSGRPTSERLALELIDAYNGTGVAVKKREDVHRMAEAGKAYAHFRW.

It belongs to the universal ribosomal protein uS7 family. As to quaternary structure, part of the 30S ribosomal subunit. Contacts proteins S9 and S11.

Functionally, one of the primary rRNA binding proteins, it binds directly to 16S rRNA where it nucleates assembly of the head domain of the 30S subunit. Is located at the subunit interface close to the decoding center, probably blocks exit of the E-site tRNA. The protein is Small ribosomal subunit protein uS7 of Kosmotoga olearia (strain ATCC BAA-1733 / DSM 21960 / TBF 19.5.1).